Reading from the N-terminus, the 475-residue chain is Ribulose bisphosphate carboxylase large chain (475 aa).

Residues 1–2 (MS) constitute a propeptide that is removed on maturation. Pro3 carries the N-acetylproline modification. Lys14 is subject to N6,N6,N6-trimethyllysine. Substrate is bound by residues Asn123 and Thr173. Lys175 serves as the catalytic Proton acceptor. Lys177 contacts substrate. 3 residues coordinate Mg(2+): Lys201, Asp203, and Glu204. An N6-carboxylysine modification is found at Lys201. His294 serves as the catalytic Proton acceptor. 3 residues coordinate substrate: Arg295, His327, and Ser379.

It belongs to the RuBisCO large chain family. Type I subfamily. In terms of assembly, heterohexadecamer of 8 large chains and 8 small chains; disulfide-linked. The disulfide link is formed within the large subunit homodimers. Requires Mg(2+) as cofactor. Post-translationally, the disulfide bond which can form in the large chain dimeric partners within the hexadecamer appears to be associated with oxidative stress and protein turnover.

Its subcellular location is the plastid. The protein localises to the chloroplast. It carries out the reaction 2 (2R)-3-phosphoglycerate + 2 H(+) = D-ribulose 1,5-bisphosphate + CO2 + H2O. It catalyses the reaction D-ribulose 1,5-bisphosphate + O2 = 2-phosphoglycolate + (2R)-3-phosphoglycerate + 2 H(+). RuBisCO catalyzes two reactions: the carboxylation of D-ribulose 1,5-bisphosphate, the primary event in carbon dioxide fixation, as well as the oxidative fragmentation of the pentose substrate in the photorespiration process. Both reactions occur simultaneously and in competition at the same active site. The sequence is that of Ribulose bisphosphate carboxylase large chain from Chlorokybus atmophyticus (Soil alga).